Consider the following 120-residue polypeptide: Putative monooxygenase GME11364 (120 aa).

One can recognise an ABM domain in the interval valine 9–leucine 99.

This sequence belongs to the LsrG family.

The protein operates within secondary metabolite biosynthesis. Its function is as follows. Putative monooxygenase; part of the gene cluster that mediates the biosynthesis of dibenzodioxocinones such as pestalotiollide B, a novel class of inhibitors against cholesterol ester transfer protein (CEPT). The biosynthesis initiates from condensation of acetate and malonate units catalyzed by the non-reducing PKS pks8/GME11356. Pks8/GME11356 lacks a thioesterase (TE) domain, which is important to the cyclizing of the third ring of atrochrysone carboxylic acid, and the esterase GME11355 might play the role of TE and catalyzes the cyclization reaction of the C ring. The lactamase-like protein GME11357 (or other beta-lactamases in Pestalotiopsis microspora) probably hydrolyzes the thioester bond between the ACP of pks8/GME11356 and the intermediate to release atrochrysone carboxylic acid, which is spontaneously dehydrates to form endocrocin anthrone. Endocrocin anthrone is further converted to emodin via the endocrocin intermediate. Emodin is then oxidized by several enzymes such as the Baeyer-Villiger oxidase GME11358, the oxidoreductase GME11367, the short chain dehydrogenase/reductase GME11373, as well as by other oxidoreductases from the cluster, to modify the A and C rings and open the B ring, and finally yield monodictyphenone. The prenyltransferase GME11375 may catalyze the addition reaction between the C5 side chains and the carbon bone of dibenzodioxocinones. The remaining biochemical reactions to the final product dibenzodioxocinones should be methylation catalyzed by methyltransferase GME11366 and reduction and lactonization reaction catalyzed by a series of oxidordeuctases. This is Putative monooxygenase GME11364 from Pestalotiopsis microspora.